A 478-amino-acid chain; its full sequence is F-box protein YDR306C (478 aa).

The span at 1–14 (MANKSRPKKIKAPY) shows a compositional bias: basic residues. 2 disordered regions span residues 1–32 (MANKSRPKKIKAPYRKYVAGEGFSSTRNDNKA) and 67–101 (RLSNEKKDKKGRKQSPSSSSTSSSKGEKNGKVIES). The segment covering 80 to 90 (QSPSSSSTSSS) has biased composition (low complexity). Residues 91–101 (KGEKNGKVIES) show a composition bias toward basic and acidic residues. Positions 112-173 (KMVLPWEIQH…CLPKLYYAPA (62 aa)) constitute an F-box domain.

As to quaternary structure, interacts with SKP1. Component of the probable SCF(YDR306C) complex containing CDC53, SKP1, RBX1 and YDR306C. Post-translationally, autoubiquitinated by the E3 ubiquitin ligase complex in conjunction with the E2 enzyme CDC34.

It functions in the pathway protein modification; protein ubiquitination. In terms of biological role, substrate recognition component of a SCF (SKP1-CUL1-F-box protein) E3 ubiquitin-protein ligase complex which mediates the ubiquitination and subsequent proteasomal degradation of target proteins. Probably recognizes and binds to phosphorylated target proteins. This is F-box protein YDR306C from Saccharomyces cerevisiae (strain ATCC 204508 / S288c) (Baker's yeast).